Reading from the N-terminus, the 1372-residue chain is DNA-directed RNA polymerase subunit beta (1372 aa).

The protein belongs to the RNA polymerase beta chain family. As to quaternary structure, the RNAP catalytic core consists of 2 alpha, 1 beta, 1 beta' and 1 omega subunit. When a sigma factor is associated with the core the holoenzyme is formed, which can initiate transcription.

The enzyme catalyses RNA(n) + a ribonucleoside 5'-triphosphate = RNA(n+1) + diphosphate. Functionally, DNA-dependent RNA polymerase catalyzes the transcription of DNA into RNA using the four ribonucleoside triphosphates as substrates. This chain is DNA-directed RNA polymerase subunit beta, found in Psychrobacter cryohalolentis (strain ATCC BAA-1226 / DSM 17306 / VKM B-2378 / K5).